We begin with the raw amino-acid sequence, 362 residues long: Adenosine deaminase (362 aa).

Zn(2+)-binding residues include His-19 and His-21. 3 residues coordinate substrate: His-21, Asp-23, and Gly-181. Zn(2+) is bound at residue His-208. The active-site Proton donor is the Glu-211. Asp-300 provides a ligand contact to Zn(2+).

Belongs to the metallo-dependent hydrolases superfamily. Adenosine and AMP deaminases family. Adenosine deaminase subfamily. Requires Zn(2+) as cofactor.

It carries out the reaction adenosine + H2O + H(+) = inosine + NH4(+). The catalysed reaction is 2'-deoxyadenosine + H2O + H(+) = 2'-deoxyinosine + NH4(+). Functionally, catalyzes the hydrolytic deamination of adenosine and 2-deoxyadenosine. This Mycolicibacterium gilvum (strain PYR-GCK) (Mycobacterium gilvum (strain PYR-GCK)) protein is Adenosine deaminase.